The sequence spans 350 residues: Hepatocyte nuclear factor 3-gamma (350 aa).

Residues 116 to 207 (AKPPYSYISL…GNMFENGCYL (92 aa)) constitute a DNA-binding region (fork-head). The interval 217–276 (EKVKKGGSGAATTTRNGTGSAASTTTPAATVTSPPQPPPPAPEPEAQGGEDVGALDCGSP) is disordered. The span at 226 to 249 (AATTTRNGTGSAASTTTPAATVTS) shows a compositional bias: low complexity. Residues 250–259 (PPQPPPPAPE) show a composition bias toward pro residues.

As to quaternary structure, interacts with FOXA2. Expressed in erythroleukemia and hepatoma cell lines and in liver and pancreas. Not expressed in any other cell lines or tissues examined.

Its subcellular location is the nucleus. Functionally, transcription factor that is thought to act as a 'pioneer' factor opening the compacted chromatin for other proteins through interactions with nucleosomal core histones and thereby replacing linker histones at target enhancer and/or promoter sites. Originally described as a transcription activator for a number of liver genes such as AFP, albumin, tyrosine aminotransferase, PEPCK, etc. Interacts with the cis-acting regulatory regions of these genes. Involved in glucose homeostasis; binds to and activates transcription from the G6PC1 promoter. Binds to the CYP3A4 promoter and activates its transcription in cooperation with CEBPA. Binds to the CYP3A7 promoter together with members of the CTF/NF-I family. Involved in regulation of neuronal-specific transcription. May be involved in regulation of spermatogenesis. The sequence is that of Hepatocyte nuclear factor 3-gamma (FOXA3) from Homo sapiens (Human).